The sequence spans 57 residues: Large ribosomal subunit protein bL32 (57 aa).

A compositionally biased stretch (basic residues) spans 1–20; sequence MAVPKKKTSKTKRDQRKANW. The interval 1-21 is disordered; that stretch reads MAVPKKKTSKTKRDQRKANWK.

The protein belongs to the bacterial ribosomal protein bL32 family.

The polypeptide is Large ribosomal subunit protein bL32 (Rippkaea orientalis (strain PCC 8801 / RF-1) (Cyanothece sp. (strain PCC 8801))).